The following is an 810-amino-acid chain: LPS-assembly protein LptD (810 aa).

The signal sequence occupies residues Met-1–Ala-29.

The protein belongs to the LptD family. In terms of assembly, component of the lipopolysaccharide transport and assembly complex. Interacts with LptE and LptA.

The protein resides in the cell outer membrane. Its function is as follows. Together with LptE, is involved in the assembly of lipopolysaccharide (LPS) at the surface of the outer membrane. The chain is LPS-assembly protein LptD from Aeromonas salmonicida (strain A449).